The sequence spans 1176 residues: DNA-directed RNA polymerase subunit beta (1176 aa).

Residues 13 to 30 are compositionally biased toward polar residues; the sequence is TDASLHQGRPQSSSNSSV. The segment at 13-35 is disordered; sequence TDASLHQGRPQSSSNSSVPGAPN.

Belongs to the RNA polymerase beta chain family. In terms of assembly, the RNAP catalytic core consists of 2 alpha, 1 beta, 1 beta' and 1 omega subunit. When a sigma factor is associated with the core the holoenzyme is formed, which can initiate transcription.

It carries out the reaction RNA(n) + a ribonucleoside 5'-triphosphate = RNA(n+1) + diphosphate. DNA-dependent RNA polymerase catalyzes the transcription of DNA into RNA using the four ribonucleoside triphosphates as substrates. In Mycobacterium marinum (strain ATCC BAA-535 / M), this protein is DNA-directed RNA polymerase subunit beta.